The following is a 121-amino-acid chain: UPF0295 protein ABC1323 (121 aa).

The next 2 helical transmembrane spans lie at 14–34 (TFAL…IFFK) and 41–61 (VIAM…YFFI).

The protein belongs to the UPF0295 family.

The protein localises to the cell membrane. In Shouchella clausii (strain KSM-K16) (Alkalihalobacillus clausii), this protein is UPF0295 protein ABC1323.